Here is a 377-residue protein sequence, read N- to C-terminus: Unsaturated glucuronyl hydrolase (377 aa).

Asp88 acts as the Nucleophile in catalysis. Asp149 functions as the Proton donor in the catalytic mechanism.

This sequence belongs to the glycosyl hydrolase 88 family. Monomer.

The protein resides in the cytoplasm. It catalyses the reaction beta-D-Delta(4)-GlcA-(1-&gt;4)-beta-D-Glc-(1-&gt;4)-alpha-L-Rha-(1-&gt;3)-D-Glc + H2O = beta-D-Glc-(1-&gt;4)-alpha-L-Rha-(1-&gt;3)-D-Glc + 5-dehydro-4-deoxy-D-glucuronate. With respect to regulation, partially inhibited by divalent metal ions such as calcium, copper, iron and mercury. Catalyzes the hydrolysis of oligosaccharides with unsaturated glucuronyl residues at the non-reducing terminal, to a sugar or an amino sugar, and an unsaturated D-glucuronic acid (GlcA), which is nonenzymatically converted immediately to alpha-keto acid. In Bacillus sp. (strain GL1), this protein is Unsaturated glucuronyl hydrolase (ugl).